The following is a 352-amino-acid chain: Ion-translocating oxidoreductase complex subunit D (352 aa).

4 consecutive transmembrane segments (helical) span residues 20 to 40, 42 to 62, 69 to 91, and 123 to 143; these read IMLLVVIAALPGIAAQTWFFG, GTLFQIVLAAITALVAEAIVL, VASHLQDYSALLTGLLLAVSIPP, and PAMIGYVVLLISFPVQMTSWL. An FMN phosphoryl threonine modification is found at T187. A run of 5 helical transmembrane segments spans residues 215 to 235, 242 to 262, 267 to 287, 301 to 321, and 322 to 342; these read LAGVGWQWVNLAWLVGGVFLL, WHIPVSFLLTLALCAALGWLF, LASPQLHLLSGATMLGAFFIL, LIFGALAGVLVWLIRSFGGYP, and DGVAFAVLLANITVPLIDYYT.

Belongs to the NqrB/RnfD family. In terms of assembly, the complex is composed of six subunits: RsxA, RsxB, RsxC, RsxD, RsxE and RsxG. The cofactor is FMN.

The protein resides in the cell inner membrane. Functionally, part of a membrane-bound complex that couples electron transfer with translocation of ions across the membrane. Required to maintain the reduced state of SoxR. The sequence is that of Ion-translocating oxidoreductase complex subunit D from Salmonella enteritidis PT4 (strain P125109).